A 324-amino-acid polypeptide reads, in one-letter code: Carbonic anhydrase, chloroplastic (324 aa).

Belongs to the beta-class carbonic anhydrase family. As to quaternary structure, homohexamer.

It is found in the plastid. The protein resides in the chloroplast stroma. The enzyme catalyses hydrogencarbonate + H(+) = CO2 + H2O. Its function is as follows. Reversible hydration of carbon dioxide. The protein is Carbonic anhydrase, chloroplastic of Hordeum vulgare (Barley).